The sequence spans 204 residues: ATP phosphoribosyltransferase (204 aa).

This sequence belongs to the ATP phosphoribosyltransferase family. Short subfamily.

Its subcellular location is the cytoplasm. The catalysed reaction is 1-(5-phospho-beta-D-ribosyl)-ATP + diphosphate = 5-phospho-alpha-D-ribose 1-diphosphate + ATP. The protein operates within amino-acid biosynthesis; L-histidine biosynthesis; L-histidine from 5-phospho-alpha-D-ribose 1-diphosphate: step 1/9. Functionally, catalyzes the condensation of ATP and 5-phosphoribose 1-diphosphate to form N'-(5'-phosphoribosyl)-ATP (PR-ATP). Has a crucial role in the pathway because the rate of histidine biosynthesis seems to be controlled primarily by regulation of HisG enzymatic activity. The polypeptide is ATP phosphoribosyltransferase (hisG) (Pyrococcus furiosus (strain ATCC 43587 / DSM 3638 / JCM 8422 / Vc1)).